Here is a 319-residue protein sequence, read N- to C-terminus: Ribose-phosphate pyrophosphokinase (319 aa).

ATP is bound by residues Asn41 to Glu43 and Arg100 to Gln101. Positions 134 and 175 each coordinate Mg(2+). The active site involves Lys198. D-ribose 5-phosphate contacts are provided by residues Arg200, Asp224, and Asp228–Ser232.

Belongs to the ribose-phosphate pyrophosphokinase family. Class I subfamily. Homohexamer. Mg(2+) serves as cofactor.

It localises to the cytoplasm. The enzyme catalyses D-ribose 5-phosphate + ATP = 5-phospho-alpha-D-ribose 1-diphosphate + AMP + H(+). The protein operates within metabolic intermediate biosynthesis; 5-phospho-alpha-D-ribose 1-diphosphate biosynthesis; 5-phospho-alpha-D-ribose 1-diphosphate from D-ribose 5-phosphate (route I): step 1/1. Involved in the biosynthesis of the central metabolite phospho-alpha-D-ribosyl-1-pyrophosphate (PRPP) via the transfer of pyrophosphoryl group from ATP to 1-hydroxyl of ribose-5-phosphate (Rib-5-P). The chain is Ribose-phosphate pyrophosphokinase from Clostridium acetobutylicum (strain ATCC 824 / DSM 792 / JCM 1419 / IAM 19013 / LMG 5710 / NBRC 13948 / NRRL B-527 / VKM B-1787 / 2291 / W).